The primary structure comprises 726 residues: Catalase-peroxidase (726 aa).

The interval 1–33 is disordered; that stretch reads MSTSDDIHNTTATGKCPFHQGGHDQSAGAGTTT. The tryptophyl-tyrosyl-methioninium (Trp-Tyr) (with M-252) cross-link spans 105-226; that stretch reads WHGAGTYRSI…LGATEMGLIY (122 aa). The active-site Proton acceptor is His-106. A cross-link (tryptophyl-tyrosyl-methioninium (Tyr-Met) (with W-105)) is located at residues 226 to 252; it reads YVNPEGPDHSGEPLSAAAAIRATFGNM. Residue His-267 coordinates heme b.

Belongs to the peroxidase family. Peroxidase/catalase subfamily. In terms of assembly, homodimer or homotetramer. Heme b is required as a cofactor. In terms of processing, formation of the three residue Trp-Tyr-Met cross-link is important for the catalase, but not the peroxidase activity of the enzyme.

It catalyses the reaction H2O2 + AH2 = A + 2 H2O. It carries out the reaction 2 H2O2 = O2 + 2 H2O. Bifunctional enzyme with both catalase and broad-spectrum peroxidase activity. The polypeptide is Catalase-peroxidase (Shigella boydii serotype 4 (strain Sb227)).